We begin with the raw amino-acid sequence, 396 residues long: Elongation factor Tu (396 aa).

The tr-type G domain occupies 10–206; that stretch reads KPHVNIGTIG…AVDESVPDPV (197 aa). The G1 stretch occupies residues 19–26; sequence GHVDHGKT. 19–26 contributes to the GTP binding site; that stretch reads GHVDHGKT. Threonine 26 serves as a coordination point for Mg(2+). The tract at residues 62–66 is G2; it reads GITIN. The segment at 83-86 is G3; it reads DAPG. GTP-binding positions include 83–87 and 138–141; these read DAPGH and NKSD. The tract at residues 138–141 is G4; that stretch reads NKSD. The G5 stretch occupies residues 176–178; the sequence is SGL.

Belongs to the TRAFAC class translation factor GTPase superfamily. Classic translation factor GTPase family. EF-Tu/EF-1A subfamily. As to quaternary structure, monomer.

It localises to the cytoplasm. It carries out the reaction GTP + H2O = GDP + phosphate + H(+). Functionally, GTP hydrolase that promotes the GTP-dependent binding of aminoacyl-tRNA to the A-site of ribosomes during protein biosynthesis. This chain is Elongation factor Tu, found in Paenarthrobacter aurescens (strain TC1).